The primary structure comprises 731 residues: Two pore channel protein 2 (731 aa).

At 1 to 68 (MAAEEQPLLG…RWYYSNVCQR (68 aa)) the chain is on the cytoplasmic side. The helical transmembrane segment at 69–89 (VLGFIIFLILILAFVEVPSSF) threads the bilayer. Residues 90–111 (TKTADVRYRSQPWQPPCGLTET) lie on the Extracellular side of the membrane. Residues 112–132 (IEAFCLLAFLVDLSVKGYLVG) form a helical membrane-spanning segment. Residues 133 to 139 (QAQLQQN) are Cytoplasmic-facing. The chain crosses the membrane as a helical span at residues 140-160 (LWLLAYFMVLVVSVVDWIVSL). The Extracellular segment spans residues 161–167 (SLACEEP). A helical membrane pass occupies residues 168 to 188 (LRMRRLLRPFFLLQNSSMMKK). The tract at residues 187-191 (KKTLK) is interaction with phosphatidylinositol 3,5-bisphosphate. Topologically, residues 189 to 203 (TLKCIRWSLPEMASV) are cytoplasmic. A helical transmembrane segment spans residues 204-224 (GLLLAIHLCLFTIIGMLLFTI). Topologically, residues 225–238 (GEKDEAQDQERLAY) are extracellular. An intramembrane region (helical; Pore-forming) is located at residues 239–263 (FRNLPEALTSLLVLLTTSNNPDVMI). Over 264 to 270 (PAYTQNR) the chain is Extracellular. Residues 271-291 (AFALFFIVFTLIGSLFLMNLL) form a helical membrane-spanning segment. The Cytoplasmic segment spans residues 292-417 (TAIIYNQFRG…TAQFIFSHHY (126 aa)). A helical membrane pass occupies residues 418–438 (FDYLGNLVALGNLLSICVFLV). At 439–449 (LDSDLLPGERD) the chain is on the extracellular side. A helical membrane pass occupies residues 450–470 (DFVLGILDYIFILYYLLELLF). Topologically, residues 471–486 (KVFALGLPGYLSYHSN) are cytoplasmic. Residues 487-507 (VFDGLLTIILLVSEICTLAVY) form a helical membrane-spanning segment. Residues 508-524 (RLPHSGWKPEQYGPLSL) lie on the Extracellular side of the membrane. The helical transmembrane segment at 525-542 (WDMTRLMNTLIVFRFLRI) threads the bilayer. Over 543-564 (IPNIKPMAEVANTILGLIPNLR) the chain is Cytoplasmic. A helical transmembrane segment spans residues 565-585 (AFGGILVVAYYVFAMIGINLF). At 586–618 (RGVIVPPGNSSLVPDNNSAVCGSFEQLGYWPNN) the chain is on the extracellular side. 2 N-linked (GlcNAc...) asparagine glycosylation sites follow: Asn-594 and Asn-601. An intramembrane region (helical; Pore-forming) is located at residues 619–641 (FDDFAAALITLWNVMVVNNWQVI). The Extracellular segment spans residues 642 to 656 (LEAYKRYAGPWSMVY). Residues 657-677 (FVLWWLVSSVIWINLFLALLL) form a helical membrane-spanning segment. The Cytoplasmic segment spans residues 678 to 731 (ENFLHRWDPQGHKQLLVGTKQMSVELMFRDILEEPKEEELMEKLHKHPHLHLCR).

This sequence belongs to the calcium channel alpha-1 subunit (TC 1.A.1.11) family. Two pore calcium channel subfamily. Homodimer. Interacts with LRRK2. Interacts with HAX1. Interacts with MTOR; the interaction is required for TPCN2 ATP sensitivity. Found in a complex with LSM12, TPCN1 and TPCN2. Interacts with LSM12. In terms of processing, N-glycosylated. In terms of tissue distribution, widely expressed. Highly expressed in macrophages. Expressed in pigmented cells.

The protein localises to the late endosome membrane. Its subcellular location is the lysosome membrane. It is found in the melanosome membrane. It catalyses the reaction Ca(2+)(in) = Ca(2+)(out). The enzyme catalyses Na(+)(in) = Na(+)(out). With respect to regulation, regulated by Mg(2+) ions, cytosolic Mg(2+) selectively inhibits outward current while lysosomal Mg(2+) modestly inhibits both the outward and inward currents. In the absence of Mg(2+), NAADP readily activates TPCN2, with properties similar to PI(3,5)P2. Na(+) current is inhibited by ATP in a MTORC-dependent manner. ATP sensitivity is independent of PI(3,5)P2. Both current elicited by PI(3,5)P2 as well as NAADP are inhibited by tetrandrine. In terms of biological role, intracellular channel initially characterized as a non-selective Ca(2+)-permeable channel activated by NAADP (nicotinic acid adenine dinucleotide phosphate), it is also a highly-selective Na(+) channel activated directly by PI(3,5)P2 (phosphatidylinositol 3,5-bisphosphate). Localizes to the lysosomal and late endosome membranes where it regulates organellar membrane excitability, membrane trafficking, and pH homeostasis. Is associated with a plethora of physiological processes, including mTOR-dependent nutrient sensing, skin pigmentation and autophagy. Ion selectivity is not fixed but rather agonist-dependent and under defined ionic conditions, can be readily activated by both NAADP and PI(3,5)P2. As calcium channel, it increases the pH in the lysosomal lumen, as sodium channel, it promotes lysosomal exocytosis. Plays a crucial role in endolysosomal trafficking in the endolysosomal degradation pathway and is potentially involved in the homeostatic control of many macromolecules and cell metabolites. Also expressed in melanosomes of pigmented cells where mediates a Ca(2+) channel and/or PI(3,5)P2-activated melanosomal Na(+) channel to acidify pH and inhibit tyrosinase activity required for melanogenesis and pigmentation. Unlike the voltage-dependent TPCN1, TPCN2 is voltage independent and can be activated solely by PI(3,5)P2 binding. In contrast, PI(4,5)P2, PI(3,4)P2, PI(3)P and PI(5)P have no obvious effect on channel activation. Functionally, (Microbial infection) During Ebola virus (EBOV) infection, controls the movement of endosomes containing virus particles and is required by EBOV to escape from the endosomal network into the cell cytoplasm. The chain is Two pore channel protein 2 from Mus musculus (Mouse).